The chain runs to 469 residues: Cell division protein FtsP (469 aa).

The segment at residues 1 to 29 (MPRLSRRQLLKTAAISTALSTVPAPLLAA) is a signal peptide (tat-type signal). Residues 228-286 (IRLRLLNASLARAYDLRLDNDQEMLLIAQDLSFLPKAKSVKSLVLSPGERAEILVNMNE) form the Plastocyanin-like domain.

The protein belongs to the FtsP family. In terms of processing, predicted to be exported by the Tat system. The position of the signal peptide cleavage has not been experimentally proven.

It is found in the periplasm. In terms of biological role, cell division protein that is required for growth during stress conditions. May be involved in protecting or stabilizing the divisomal assembly under conditions of stress. The polypeptide is Cell division protein FtsP (Haemophilus influenzae (strain 86-028NP)).